Here is a 102-residue protein sequence, read N- to C-terminus: Cytochrome c-553 (102 aa).

The first 23 residues, methionine 1–alanine 23, serve as a signal peptide directing secretion. Positions 33, 36, 37, and 80 each coordinate heme c.

Binds 1 heme c group covalently per subunit.

It localises to the periplasm. Its function is as follows. Natural electron acceptor for a formate dehydrogenase. This is Cytochrome c-553 from Nitratidesulfovibrio vulgaris (strain DSM 19637 / Miyazaki F) (Desulfovibrio vulgaris).